Reading from the N-terminus, the 451-residue chain is Tubulin beta-4 chain (451 aa).

Residues Q11, E69, S138, G142, T143, G144, N204, and N226 each coordinate GTP. Residue E69 coordinates Mg(2+). The segment covering 417–427 has biased composition (polar residues); that stretch reads DLVSEYQQYQD. The interval 417–451 is disordered; the sequence is DLVSEYQQYQDATAEEEGEYDEDDGGYGDEDDGMM. The segment covering 429–451 has biased composition (acidic residues); that stretch reads TAEEEGEYDEDDGGYGDEDDGMM.

Belongs to the tubulin family. Dimer of alpha and beta chains. A typical microtubule is a hollow water-filled tube with an outer diameter of 25 nm and an inner diameter of 15 nM. Alpha-beta heterodimers associate head-to-tail to form protofilaments running lengthwise along the microtubule wall with the beta-tubulin subunit facing the microtubule plus end conferring a structural polarity. Microtubules usually have 13 protofilaments but different protofilament numbers can be found in some organisms and specialized cells. Mg(2+) is required as a cofactor.

The protein resides in the cytoplasm. It localises to the cytoskeleton. Its function is as follows. Tubulin is the major constituent of microtubules, a cylinder consisting of laterally associated linear protofilaments composed of alpha- and beta-tubulin heterodimers. Microtubules grow by the addition of GTP-tubulin dimers to the microtubule end, where a stabilizing cap forms. Below the cap, tubulin dimers are in GDP-bound state, owing to GTPase activity of alpha-tubulin. The sequence is that of Tubulin beta-4 chain (TUBB4) from Oomycete-like sp. (strain MacKay2000).